The chain runs to 155 residues: MNYHQYYPIDVVNGPGTRCTLFVSGCVHQCKGCYNQSTWSLSSGHRYTQEMEDKIIADLKDTRIKRRGLSLSGGDPMHPANLSAVLQLVQRVKTECPDKDIWLWTGYTLAELDDSQQALLPYIDVLVDGKFIQEQADPGLEWRGSANQVIHRFTL.

[4Fe-4S] cluster contacts are provided by Cys-26, Cys-30, and Cys-33. S-adenosyl-L-methionine contacts are provided by residues 32–34 and Gly-74; that span reads GCY.

It belongs to the organic radical-activating enzymes family. Forms a tetramer composed of two NrdD and two NrdG subunits. Requires [4Fe-4S] cluster as cofactor.

Its subcellular location is the cytoplasm. It carries out the reaction glycyl-[protein] + reduced [flavodoxin] + S-adenosyl-L-methionine = glycin-2-yl radical-[protein] + semiquinone [flavodoxin] + 5'-deoxyadenosine + L-methionine + H(+). Functionally, activation of anaerobic ribonucleoside-triphosphate reductase under anaerobic conditions by generation of an organic free radical, using S-adenosylmethionine and reduced flavodoxin as cosubstrates to produce 5'-deoxy-adenosine. The chain is Anaerobic ribonucleoside-triphosphate reductase-activating protein (nrdG) from Vibrio cholerae serotype O1 (strain ATCC 39315 / El Tor Inaba N16961).